A 336-amino-acid chain; its full sequence is Myb family transcription factor PHL8 (336 aa).

Positions 31-91 (TDAKPRLKWT…HLQKYRLGKS (61 aa)) constitute an HTH myb-type domain. Positions 62-87 (PKGLMKVMEIPGLTLYHLKSHLQKYR) form a DNA-binding region, H-T-H motif. The tract at residues 100-134 (EVSSASENQEVESKNDSRDLRGCSVTEENSNPAKE) is disordered. Basic and acidic residues predominate over residues 110 to 120 (VESKNDSRDLR). Residues 139-159 (TEALQMQMEVQKKLHEQIEVQ) are a coiled coil. An LHEQLE motif is present at residues 152–157 (LHEQIE).

Belongs to the MYB-CC family.

It is found in the nucleus. The chain is Myb family transcription factor PHL8 from Arabidopsis thaliana (Mouse-ear cress).